The following is a 938-amino-acid chain: Bifunctional uridylyltransferase/uridylyl-removing enzyme (938 aa).

The uridylyltransferase stretch occupies residues 1–379 (MPPRLRPTHL…PGRAQKRKPL (379 aa)). The interval 380 to 733 (DEPGFHEVGG…GRIRSELNAA (354 aa)) is uridylyl-removing. The region spanning 495–617 (VDEHTLRAVG…VQSPERLRLL (123 aa)) is the HD domain. ACT domains follow at residues 734–813 (EVVV…PVAR) and 845–924 (VVEA…TAQA).

The protein belongs to the GlnD family. Requires Mg(2+) as cofactor.

It carries out the reaction [protein-PII]-L-tyrosine + UTP = [protein-PII]-uridylyl-L-tyrosine + diphosphate. The enzyme catalyses [protein-PII]-uridylyl-L-tyrosine + H2O = [protein-PII]-L-tyrosine + UMP + H(+). Uridylyltransferase (UTase) activity is inhibited by glutamine, while glutamine activates uridylyl-removing (UR) activity. Its function is as follows. Modifies, by uridylylation and deuridylylation, the PII regulatory proteins (GlnB and homologs), in response to the nitrogen status of the cell that GlnD senses through the glutamine level. Under low glutamine levels, catalyzes the conversion of the PII proteins and UTP to PII-UMP and PPi, while under higher glutamine levels, GlnD hydrolyzes PII-UMP to PII and UMP (deuridylylation). Thus, controls uridylylation state and activity of the PII proteins, and plays an important role in the regulation of nitrogen assimilation and metabolism. This chain is Bifunctional uridylyltransferase/uridylyl-removing enzyme, found in Phenylobacterium zucineum (strain HLK1).